The following is a 367-amino-acid chain: Mannan endo-1,4-beta-mannosidase (367 aa).

Positions 1–17 (MLLTALAVLFASTGCQA) are cleaved as a signal peptide. The substrate site is built by Trp79 and Asn176. Glu177 functions as the Proton donor in the catalytic mechanism. Cysteines 192 and 259 form a disulfide. Residues Trp205, Trp240, and Tyr279 each coordinate substrate. The Nucleophile role is filled by Glu308. Trp337 lines the substrate pocket.

In terms of assembly, monomer. The disulfide bond between Cys-192 and Cys-259 has not been observed in X-ray crystallography. This may be a consequence of the X-ray radiation.

The catalysed reaction is Random hydrolysis of (1-&gt;4)-beta-D-mannosidic linkages in mannans, galactomannans and glucomannans.. Functionally, hydrolyzes 1,4-beta linked polysaccharide backbones of mannans. Hydrolyzes mannohexaose (M6) preferentially to mannotriose (M4) and less preferentially to mannotetraose (M3), mannopentaose (M5), and mannobiose (M2); hydrolyzes M5 preferentially to M2, and M3, and less preferentially to mannotetraose M4; hydrolyzes M4 preferentially to M3, and less preferentially to mannose (M1), plus very little M2. Does not hydrolyze mannobiose or mannotriose. Does not hydrolyze xlyan, starch, cellulose or galactose. The polypeptide is Mannan endo-1,4-beta-mannosidase (Mytilus edulis (Blue mussel)).